The primary structure comprises 333 residues: Probable xyloglucan endotransglucosylase/hydrolase protein 27 (333 aa).

The first 20 residues, 1-20 (METLSRLLVFMSLFSGLVSG), serve as a signal peptide directing secretion. Residues 21–223 (FALQNLPITS…YKYAPYIARF (203 aa)) enclose the GH16 domain. The active-site Nucleophile is the Glu-108. The active-site Proton donor is Glu-112. Xyloglucan contacts are provided by residues Glu-112 and 125–127 (QTN). Residue Asn-131 is glycosylated (N-linked (GlcNAc...) asparagine). Xyloglucan is bound by residues 135–139 (HSGRE), 202–203 (KW), Gly-207, and Arg-282. The cysteines at positions 277 and 290 are disulfide-linked. The segment at 311–333 (IPRRHRNGKHRSKRSRVDGTESI) is disordered. Basic residues predominate over residues 312–324 (PRRHRNGKHRSKR).

Belongs to the glycosyl hydrolase 16 family. XTH group 3 subfamily. Post-translationally, contains at least one intrachain disulfide bond essential for its enzymatic activity. In terms of tissue distribution, expressed in 7 day old seedlings, roots, hypocotyls, rosette leaves, internodes between nodes bearing axillary shoots, nodes bearing flowers, flower buds, anthers and siliques.

The protein resides in the secreted. Its subcellular location is the cell wall. It localises to the extracellular space. The protein localises to the apoplast. It carries out the reaction breaks a beta-(1-&gt;4) bond in the backbone of a xyloglucan and transfers the xyloglucanyl segment on to O-4 of the non-reducing terminal glucose residue of an acceptor, which can be a xyloglucan or an oligosaccharide of xyloglucan.. Its function is as follows. Catalyzes xyloglucan endohydrolysis (XEH) and/or endotransglycosylation (XET). Cleaves and religates xyloglucan polymers, an essential constituent of the primary cell wall, and thereby participates in cell wall construction of growing tissues. Required for cell wall modification during the development of tracheary elements. The polypeptide is Probable xyloglucan endotransglucosylase/hydrolase protein 27 (XTH27) (Arabidopsis thaliana (Mouse-ear cress)).